The following is a 500-amino-acid chain: Probable cytosol aminopeptidase (500 aa).

Residues Lys-265 and Asp-270 each coordinate Mn(2+). The active site involves Lys-277. 3 residues coordinate Mn(2+): Asp-288, Asp-347, and Glu-349. The active site involves Arg-351.

Belongs to the peptidase M17 family. It depends on Mn(2+) as a cofactor.

The protein localises to the cytoplasm. The enzyme catalyses Release of an N-terminal amino acid, Xaa-|-Yaa-, in which Xaa is preferably Leu, but may be other amino acids including Pro although not Arg or Lys, and Yaa may be Pro. Amino acid amides and methyl esters are also readily hydrolyzed, but rates on arylamides are exceedingly low.. The catalysed reaction is Release of an N-terminal amino acid, preferentially leucine, but not glutamic or aspartic acids.. In terms of biological role, presumably involved in the processing and regular turnover of intracellular proteins. Catalyzes the removal of unsubstituted N-terminal amino acids from various peptides. This chain is Probable cytosol aminopeptidase, found in Rickettsia felis (strain ATCC VR-1525 / URRWXCal2) (Rickettsia azadi).